The chain runs to 99 residues: Gibberellin-regulated protein 3 (99 aa).

The signal sequence occupies residues 1–26 (MAIFRSTLVLLLILFCLTTFELHVHA).

The protein belongs to the GASA family. Post-translationally, six disulfide bonds may be present. In terms of tissue distribution, expressed in siliques, dry seeds and vasculature of roots and rosette leaves.

It localises to the secreted. Its function is as follows. Gibberellin-regulated protein that may function in hormonal controlled steps of development such as seed germination, flowering and seed maturation. The protein is Gibberellin-regulated protein 3 (GASA3) of Arabidopsis thaliana (Mouse-ear cress).